The primary structure comprises 251 residues: Probable transcriptional regulatory protein Swol_1435 (251 aa).

Residues 1 to 23 (MAGHSKWANIKHKKARSDEKRGK) form a disordered region.

The protein belongs to the TACO1 family.

The protein localises to the cytoplasm. This Syntrophomonas wolfei subsp. wolfei (strain DSM 2245B / Goettingen) protein is Probable transcriptional regulatory protein Swol_1435.